The sequence spans 620 residues: Ferric/cupric reductase transmembrane component 7 (620 aa).

Topologically, residues Met-1–Lys-45 are extracellular. A helical membrane pass occupies residues Phe-46–Met-66. At Tyr-67–Lys-107 the chain is on the cytoplasmic side. A helical transmembrane segment spans residues Phe-108 to Val-128. Topologically, residues Met-129–Ser-167 are extracellular. In terms of domain architecture, Ferric oxidoreductase spans Ala-161–Gly-320. The helical transmembrane segment at Leu-168–Leu-188 threads the bilayer. Over Ser-189–Asn-194 the chain is Cytoplasmic. Residues Ile-195 to Phe-215 traverse the membrane as a helical segment. Positions 197 and 211 each coordinate heme. Residues Leu-216–Met-237 are Extracellular-facing. Residues Trp-238–Ile-258 traverse the membrane as a helical segment. Over Ala-259–Glu-265 the chain is Cytoplasmic. A helical transmembrane segment spans residues Ile-266–Val-286. Heme is bound by residues His-271 and His-285. At Tyr-287–Ser-292 the chain is on the extracellular side. A helical membrane pass occupies residues His-293–Val-313. The Cytoplasmic portion of the chain corresponds to Lys-314–Tyr-620. Residues Arg-321–Asp-419 form the FAD-binding FR-type domain. Residue His-369 to Pro-375 coordinates FAD. Residue Gly-411–Gly-414 participates in NADP(+) binding. Residues Ser-519–Thr-543 are disordered. Over residues Asp-523–Glu-532 the composition is skewed to basic and acidic residues. Cys-578–Phe-579 contributes to the NADP(+) binding site.

It belongs to the ferric reductase (FRE) family. It depends on FAD as a cofactor.

It is found in the cell membrane. It catalyses the reaction 2 a Fe(II)-siderophore + NADP(+) + H(+) = 2 a Fe(III)-siderophore + NADPH. Its function is as follows. Cell surface metalloreductase. May be involved in copper homeostasis. This Saccharomyces cerevisiae (strain ATCC 204508 / S288c) (Baker's yeast) protein is Ferric/cupric reductase transmembrane component 7 (FRE7).